The chain runs to 252 residues: Putative endonuclease C1F12.06c (252 aa).

2 residues coordinate Mg(2+): D43 and D114.

This sequence belongs to the endonuclease V family.

Its subcellular location is the cytoplasm. It is found in the nucleus. The sequence is that of Putative endonuclease C1F12.06c from Schizosaccharomyces pombe (strain 972 / ATCC 24843) (Fission yeast).